We begin with the raw amino-acid sequence, 147 residues long: Cyanate hydratase (147 aa).

Catalysis depends on residues arginine 88, glutamate 91, and serine 114.

It belongs to the cyanase family.

The catalysed reaction is cyanate + hydrogencarbonate + 3 H(+) = NH4(+) + 2 CO2. Its function is as follows. Catalyzes the reaction of cyanate with bicarbonate to produce ammonia and carbon dioxide. The chain is Cyanate hydratase from Dechloromonas aromatica (strain RCB).